We begin with the raw amino-acid sequence, 286 residues long: Formamidopyrimidine-DNA glycosylase (286 aa).

The active-site Schiff-base intermediate with DNA is proline 2. The Proton donor role is filled by glutamate 3. Lysine 61 serves as the catalytic Proton donor; for beta-elimination activity. Histidine 96, arginine 117, and lysine 160 together coordinate DNA. Residues 246-280 (DAYGREGLPCRRCATPMRRRPWMNRSSYFCPKCQR) form an FPG-type zinc finger. Arginine 270 functions as the Proton donor; for delta-elimination activity in the catalytic mechanism.

This sequence belongs to the FPG family. As to quaternary structure, monomer. Requires Zn(2+) as cofactor.

The catalysed reaction is Hydrolysis of DNA containing ring-opened 7-methylguanine residues, releasing 2,6-diamino-4-hydroxy-5-(N-methyl)formamidopyrimidine.. It carries out the reaction 2'-deoxyribonucleotide-(2'-deoxyribose 5'-phosphate)-2'-deoxyribonucleotide-DNA = a 3'-end 2'-deoxyribonucleotide-(2,3-dehydro-2,3-deoxyribose 5'-phosphate)-DNA + a 5'-end 5'-phospho-2'-deoxyribonucleoside-DNA + H(+). In terms of biological role, involved in base excision repair of DNA damaged by oxidation or by mutagenic agents. Acts as a DNA glycosylase that recognizes and removes damaged bases. Has a preference for oxidized purines, such as 7,8-dihydro-8-oxoguanine (8-oxoG). Has AP (apurinic/apyrimidinic) lyase activity and introduces nicks in the DNA strand. Cleaves the DNA backbone by beta-delta elimination to generate a single-strand break at the site of the removed base with both 3'- and 5'-phosphates. In Streptomyces avermitilis (strain ATCC 31267 / DSM 46492 / JCM 5070 / NBRC 14893 / NCIMB 12804 / NRRL 8165 / MA-4680), this protein is Formamidopyrimidine-DNA glycosylase.